Reading from the N-terminus, the 472-residue chain is 23S rRNA (uracil(1939)-C(5))-methyltransferase RlmD (472 aa).

The segment covering 1–15 has biased composition (basic residues); the sequence is MSRTAPHRRAPKRYK. The interval 1 to 23 is disordered; the sequence is MSRTAPHRRAPKRYKTPPPAPAH. Residues 23-87 form the TRAM domain; that stretch reads HVVTGNEPVI…PKFEQAEVVQ (65 aa). [4Fe-4S] cluster-binding residues include C100, C106, C109, and C188. Positions 296, 325, 330, 346, 374, and 395 each coordinate S-adenosyl-L-methionine. The Nucleophile role is filled by C428.

It belongs to the class I-like SAM-binding methyltransferase superfamily. RNA M5U methyltransferase family. RlmD subfamily.

It catalyses the reaction uridine(1939) in 23S rRNA + S-adenosyl-L-methionine = 5-methyluridine(1939) in 23S rRNA + S-adenosyl-L-homocysteine + H(+). Functionally, catalyzes the formation of 5-methyl-uridine at position 1939 (m5U1939) in 23S rRNA. The chain is 23S rRNA (uracil(1939)-C(5))-methyltransferase RlmD from Paraburkholderia xenovorans (strain LB400).